The following is a 466-amino-acid chain: MSNNTDLSPVHVIGGGLAGSEAAWQIAQAGVPVVLHEMRPVRGTDAHKTEQLAELVCSNSFRSDDAETNAVGVLHAEMRLAGSLIMACADAHQVPAGGALAVDREGFSQAVTARLEAHPLITIEREEITGLPPTEWGTTIIATGPLTAPSLAEAIAAETDADALAFFDAIAPIIHFDSINMDVCWFQSRYDKVGPGGTGKDYINCPMDEEQYEAFVAALIEGDKTDFKEWEGTPYFDGCLPIEVMAERGPETLRHGPMKPMGLTNAHNPTVKPYAVVQLRQDNALGTLYNMVGFQTKLKYGSQTGIFKMIPGLENAEFARLGGLHRNTYLNSPVLLDNVLRLKSRQTLRFAGQVTGCEGYVESSAIGLLAGRFTAAEKLSQAAVPPPPTTAFGALLGHITGGHIVTDDEPGKRSFQPMNVNFGLFPPVDVPKPEGKRLRGKEKTIAKKRALSARALADCRNWLSLY.

Gly-14 to Gly-19 serves as a coordination point for FAD.

This sequence belongs to the MnmG family. TrmFO subfamily. FAD serves as cofactor.

It localises to the cytoplasm. It carries out the reaction uridine(54) in tRNA + (6R)-5,10-methylene-5,6,7,8-tetrahydrofolate + NADH + H(+) = 5-methyluridine(54) in tRNA + (6S)-5,6,7,8-tetrahydrofolate + NAD(+). It catalyses the reaction uridine(54) in tRNA + (6R)-5,10-methylene-5,6,7,8-tetrahydrofolate + NADPH + H(+) = 5-methyluridine(54) in tRNA + (6S)-5,6,7,8-tetrahydrofolate + NADP(+). Catalyzes the folate-dependent formation of 5-methyl-uridine at position 54 (M-5-U54) in all tRNAs. The protein is Methylenetetrahydrofolate--tRNA-(uracil-5-)-methyltransferase TrmFO of Brucella canis (strain ATCC 23365 / NCTC 10854 / RM-666).